Here is a 208-residue protein sequence, read N- to C-terminus: Uracil phosphoribosyltransferase (208 aa).

5-phospho-alpha-D-ribose 1-diphosphate contacts are provided by residues R78, R103, and 130–138 (DPMLATGGS). Uracil is bound by residues I193 and 198-200 (GDA). D199 lines the 5-phospho-alpha-D-ribose 1-diphosphate pocket.

The protein belongs to the UPRTase family. The cofactor is Mg(2+).

It catalyses the reaction UMP + diphosphate = 5-phospho-alpha-D-ribose 1-diphosphate + uracil. It participates in pyrimidine metabolism; UMP biosynthesis via salvage pathway; UMP from uracil: step 1/1. With respect to regulation, allosterically activated by GTP. Catalyzes the conversion of uracil and 5-phospho-alpha-D-ribose 1-diphosphate (PRPP) to UMP and diphosphate. The chain is Uracil phosphoribosyltransferase from Yersinia pestis.